A 158-amino-acid polypeptide reads, in one-letter code: Crossover junction endodeoxyribonuclease RuvC (158 aa).

Active-site residues include Asp-7, Glu-67, and Asp-140. 3 residues coordinate Mg(2+): Asp-7, Glu-67, and Asp-140.

Belongs to the RuvC family. As to quaternary structure, homodimer which binds Holliday junction (HJ) DNA. The HJ becomes 2-fold symmetrical on binding to RuvC with unstacked arms; it has a different conformation from HJ DNA in complex with RuvA. In the full resolvosome a probable DNA-RuvA(4)-RuvB(12)-RuvC(2) complex forms which resolves the HJ. Mg(2+) is required as a cofactor.

The protein resides in the cytoplasm. The catalysed reaction is Endonucleolytic cleavage at a junction such as a reciprocal single-stranded crossover between two homologous DNA duplexes (Holliday junction).. In terms of biological role, the RuvA-RuvB-RuvC complex processes Holliday junction (HJ) DNA during genetic recombination and DNA repair. Endonuclease that resolves HJ intermediates. Cleaves cruciform DNA by making single-stranded nicks across the HJ at symmetrical positions within the homologous arms, yielding a 5'-phosphate and a 3'-hydroxyl group; requires a central core of homology in the junction. The consensus cleavage sequence is 5'-(A/T)TT(C/G)-3'. Cleavage occurs on the 3'-side of the TT dinucleotide at the point of strand exchange. HJ branch migration catalyzed by RuvA-RuvB allows RuvC to scan DNA until it finds its consensus sequence, where it cleaves and resolves the cruciform DNA. The sequence is that of Crossover junction endodeoxyribonuclease RuvC from Dictyoglomus turgidum (strain DSM 6724 / Z-1310).